Here is a 346-residue protein sequence, read N- to C-terminus: N-acetyl-gamma-glutamyl-phosphate reductase (346 aa).

Residue Cys150 is part of the active site.

It belongs to the NAGSA dehydrogenase family. Type 1 subfamily.

It localises to the cytoplasm. The enzyme catalyses N-acetyl-L-glutamate 5-semialdehyde + phosphate + NADP(+) = N-acetyl-L-glutamyl 5-phosphate + NADPH + H(+). It participates in amino-acid biosynthesis; L-arginine biosynthesis; N(2)-acetyl-L-ornithine from L-glutamate: step 3/4. In terms of biological role, catalyzes the NADPH-dependent reduction of N-acetyl-5-glutamyl phosphate to yield N-acetyl-L-glutamate 5-semialdehyde. The chain is N-acetyl-gamma-glutamyl-phosphate reductase from Alkaliphilus metalliredigens (strain QYMF).